Here is a 430-residue protein sequence, read N- to C-terminus: Adenylosuccinate synthetase (430 aa).

GTP contacts are provided by residues 12–18 (GDEGKGK) and 40–42 (GHT). Aspartate 13 acts as the Proton acceptor in catalysis. Aspartate 13 and glycine 40 together coordinate Mg(2+). IMP contacts are provided by residues 13 to 16 (DEGK), 38 to 41 (NAGH), threonine 128, arginine 142, glutamine 223, threonine 238, and arginine 302. Residue histidine 41 is the Proton donor of the active site. 298–304 (TTTGRPR) is a binding site for substrate. GTP-binding positions include arginine 304, 330–332 (SID), and 412–414 (SVG).

Belongs to the adenylosuccinate synthetase family. Homodimer. It depends on Mg(2+) as a cofactor.

It localises to the cytoplasm. It catalyses the reaction IMP + L-aspartate + GTP = N(6)-(1,2-dicarboxyethyl)-AMP + GDP + phosphate + 2 H(+). It participates in purine metabolism; AMP biosynthesis via de novo pathway; AMP from IMP: step 1/2. Functionally, plays an important role in the de novo pathway of purine nucleotide biosynthesis. Catalyzes the first committed step in the biosynthesis of AMP from IMP. The chain is Adenylosuccinate synthetase from Streptococcus pyogenes serotype M3 (strain ATCC BAA-595 / MGAS315).